We begin with the raw amino-acid sequence, 874 residues long: Alanine--tRNA ligase (874 aa).

Residues H559, H563, C661, and H665 each coordinate Zn(2+).

The protein belongs to the class-II aminoacyl-tRNA synthetase family. The cofactor is Zn(2+).

The protein localises to the cytoplasm. The catalysed reaction is tRNA(Ala) + L-alanine + ATP = L-alanyl-tRNA(Ala) + AMP + diphosphate. Functionally, catalyzes the attachment of alanine to tRNA(Ala) in a two-step reaction: alanine is first activated by ATP to form Ala-AMP and then transferred to the acceptor end of tRNA(Ala). Also edits incorrectly charged Ser-tRNA(Ala) and Gly-tRNA(Ala) via its editing domain. The sequence is that of Alanine--tRNA ligase from Microcystis aeruginosa (strain NIES-843 / IAM M-2473).